Consider the following 196-residue polypeptide: Pro-FMRFamide-related neuropeptide VF (196 aa).

A signal peptide spans 1–26 (MEIISSKLFILLTLATSSLLTSNIFC). Positions 27–55 (ADELVMSNLHSKENYDKYSEPRGYPKGER) are excised as a propeptide. A Phenylalanine amide modification is found at phenylalanine 92. 2 consecutive propeptides follow at residues 95–99 (NVQEE) and 115–121 (NMEVSLV). Phenylalanine 131 is modified (phenylalanine amide). Positions 134–196 (TTTAKSVCRM…IDDAELKQEK (63 aa)) are excised as a propeptide.

This sequence belongs to the FARP (FMRFamide related peptide) family. In terms of tissue distribution, specifically expressed in the retina. As to expression, detected in the hypothalamus.

The protein resides in the secreted. Its function is as follows. Efficiently inhibits forskolin-induced production of cAMP. Acts as a potent negative regulator of gonadotropin synthesis and secretion. Induces secretion of prolactin. In terms of biological role, efficiently inhibits forskolin-induced production of cAMP. Blocks morphine-induced analgesia. Shows no inhibitory activity of forskolin-induced production of cAMP. In Homo sapiens (Human), this protein is Pro-FMRFamide-related neuropeptide VF.